Here is a 372-residue protein sequence, read N- to C-terminus: L-selectin (372 aa).

An N-terminal signal peptide occupies residues 1-28 (MVFPWRCQSAQRGSWSFLKLWIRTLLCC). The propeptide occupies 29 to 38 (DLLPHHGTHC). The Extracellular segment spans residues 39-332 (WTYHYSERSM…FSKIKEGDYN (294 aa)). The 101-residue stretch at 55-155 (KFCKHNYTDL…ACHKRKAALC (101 aa)) folds into the C-type lectin domain. Disulfide bonds link cysteine 57-cysteine 155, cysteine 128-cysteine 147, cysteine 128-cysteine 160, cysteine 160-cysteine 171, cysteine 165-cysteine 180, cysteine 182-cysteine 191, cysteine 197-cysteine 241, cysteine 227-cysteine 254, cysteine 259-cysteine 303, and cysteine 289-cysteine 316. Residues asparagine 60 and asparagine 104 are each glycosylated (N-linked (GlcNAc...) asparagine). Ca(2+) contacts are provided by glutamate 118, asparagine 120, glutamate 126, asparagine 143, and aspartate 144. The 37-residue stretch at 156-192 (YTASCQPESCNRHGECVETINNNTCICDPGYYGPQCQ) folds into the EGF-like domain. A glycan (N-linked (GlcNAc...) asparagine) is linked at asparagine 177. Sushi domains follow at residues 195–256 (IQCE…ICQV) and 257–318 (IQCM…ICQK). Asparagine 226, asparagine 246, and asparagine 278 each carry an N-linked (GlcNAc...) asparagine glycan. Residues 333–355 (PLFIPVAVMVTAFSGLAFIIWLA) traverse the membrane as a helical segment. The Cytoplasmic segment spans residues 356-372 (RRLKKGKKSQERMDDPY).

Belongs to the selectin/LECAM family. As to quaternary structure, interaction with SELPLG/PSGL1 and PODXL2 is required for promoting recruitment and rolling of leukocytes. This interaction is dependent on the sialyl Lewis X glycan modification of SELPLG and PODXL2, and tyrosine sulfation modifications of SELPLG. Sulfation on 'Tyr-51' of SELPLG is important for L-selectin binding. Post-translationally, N-glycosylated. As to expression, expressed in peripheral blood mononuclear cells (PBMC), spleen and thymus.

It is found in the cell membrane. Calcium-dependent lectin that mediates cell adhesion by binding to glycoproteins on neighboring cells. Mediates the adherence of lymphocytes to endothelial cells of high endothelial venules in peripheral lymph nodes. Promotes initial tethering and rolling of leukocytes in endothelia. This is L-selectin (Sell) from Rattus norvegicus (Rat).